Reading from the N-terminus, the 200-residue chain is Large ribosomal subunit protein uL4 (200 aa).

A disordered region spans residues 42–65 (TRAHKSRADVSGGGKKPFRQKGTG).

Belongs to the universal ribosomal protein uL4 family. In terms of assembly, part of the 50S ribosomal subunit.

One of the primary rRNA binding proteins, this protein initially binds near the 5'-end of the 23S rRNA. It is important during the early stages of 50S assembly. It makes multiple contacts with different domains of the 23S rRNA in the assembled 50S subunit and ribosome. In terms of biological role, forms part of the polypeptide exit tunnel. The chain is Large ribosomal subunit protein uL4 from Acinetobacter baumannii (strain AB307-0294).